Reading from the N-terminus, the 254-residue chain is Phosphate import ATP-binding protein PstB (254 aa).

Residues 9–249 (MSVKDLDLFY…PVDKRTEDYI (241 aa)) form the ABC transporter domain. 41–48 (GPSGCGKS) lines the ATP pocket.

The protein belongs to the ABC transporter superfamily. Phosphate importer (TC 3.A.1.7) family. The complex is composed of two ATP-binding proteins (PstB), two transmembrane proteins (PstC and PstA) and a solute-binding protein (PstS).

Its subcellular location is the cell membrane. It carries out the reaction phosphate(out) + ATP + H2O = ADP + 2 phosphate(in) + H(+). In terms of biological role, part of the ABC transporter complex PstSACB involved in phosphate import. Responsible for energy coupling to the transport system. In Clostridioides difficile (strain 630) (Peptoclostridium difficile), this protein is Phosphate import ATP-binding protein PstB.